We begin with the raw amino-acid sequence, 330 residues long: Putative zinc finger protein CONSTANS-LIKE 11 (330 aa).

Residues C5, C8, C28, and H33 each coordinate Zn(2+). The B box-type 1; atypical zinc finger occupies 5–47 (CDFCGTEKALIYCKSDSAKLCLNCDVNVHSANPLSQRHTRSLL). The segment at 48–88 (CEKCSLQPTAVHCMNENVSLCQGCQWTASNCTGLGHRLQSL) adopts a B box-type 2; degenerate zinc-finger fold. Positions 276–318 (RDEAKKRYKQKKSKRMFGKQIRYASRKARADTRKRVKGRFVKS) constitute a CCT domain.

It belongs to the CONSTANS family.

The protein resides in the nucleus. This is Putative zinc finger protein CONSTANS-LIKE 11 (COL11) from Arabidopsis thaliana (Mouse-ear cress).